A 93-amino-acid chain; its full sequence is Molybdopterin synthase sulfur carrier subunit (93 aa).

A 1-thioglycine; alternate modification is found at Gly-93. At Gly-93 the chain carries Glycyl adenylate; alternate.

It belongs to the MoaD family. MOCS2A subfamily. In terms of assembly, heterotetramer; composed of 2 small (MOCS2A) and 2 large (MOCS2B) subunits. In terms of processing, C-terminal thiocarboxylation occurs in 2 steps, it is first acyl-adenylated (-COAMP) via the hesA/moeB/thiF part of UBA4, then thiocarboxylated (-COSH) via the rhodanese domain of UBA4.

It localises to the cytoplasm. It participates in cofactor biosynthesis; molybdopterin biosynthesis. Functionally, acts as a sulfur carrier required for molybdopterin biosynthesis. Component of the molybdopterin synthase complex that catalyzes the conversion of precursor Z into molybdopterin by mediating the incorporation of 2 sulfur atoms into precursor Z to generate a dithiolene group. In the complex, serves as sulfur donor by being thiocarboxylated (-COSH) at its C-terminus by UBA4. After interaction with MOCS2B, the sulfur is then transferred to precursor Z to form molybdopterin. This chain is Molybdopterin synthase sulfur carrier subunit, found in Mycosarcoma maydis (Corn smut fungus).